Reading from the N-terminus, the 428-residue chain is MENPYEIVAVIAREILDSRGNPTVEVDVHTPISMGRAAVPSGASTGTHEAVELRDGGKRYHGKGVRRAVENVNKIIAPELVGMDVRWQREIDRLLIELDGTENKSNLGANAILAVSLAVAKAAANALELPLYQYLGGVNAYVLPVPLSNVINGGVHAGNDLDFQEFMIMPIGANSFREAIRWVSETYHVLKKVIAEKYGKNAVNVGDEGGFAPPMKEVTEPLDVLIKAIEEAGYKPGEEIALALDAASSEFYKDGKYIVSGKEYTREELLELYKELTSTYPIVSIEDPFHEEDWEGFVMITRELGKKVQIVGDDLFVTNPKRLKKGIEMGAANALLLKVNQIGTLTEAMDAAYMAFRAGYGVVVSHRSGETEDATIADLAVALNAGQIKTGAPARSDRNAKYNQLIRIEEELEGVAVYAGKNFRKVFF.

Q164 is a (2R)-2-phosphoglycerate binding site. Residue E208 is the Proton donor of the active site. Mg(2+) is bound by residues D245, E286, and D313. 4 residues coordinate (2R)-2-phosphoglycerate: K338, R367, S368, and K389. Catalysis depends on K338, which acts as the Proton acceptor.

Belongs to the enolase family. It depends on Mg(2+) as a cofactor.

Its subcellular location is the cytoplasm. The protein resides in the secreted. The protein localises to the cell surface. The catalysed reaction is (2R)-2-phosphoglycerate = phosphoenolpyruvate + H2O. Its pathway is carbohydrate degradation; glycolysis; pyruvate from D-glyceraldehyde 3-phosphate: step 4/5. In terms of biological role, catalyzes the reversible conversion of 2-phosphoglycerate (2-PG) into phosphoenolpyruvate (PEP). It is essential for the degradation of carbohydrates via glycolysis. The sequence is that of Enolase from Pyrococcus abyssi (strain GE5 / Orsay).